Consider the following 518-residue polypeptide: Membrane-bound lytic murein transglycosylase F (518 aa).

Residues 1–21 (MKKLKINYLFIGILALLLAVA) form the signal peptide. The segment at 22–269 (LWPSIPWFGK…RIEEKYLGHG (248 aa)) is non-LT domain. Residues 270–518 (DDFDYVDTRT…SRKGSEEKQN (249 aa)) are LT domain. Glu314 is an active-site residue.

In the N-terminal section; belongs to the bacterial solute-binding protein 3 family. This sequence in the C-terminal section; belongs to the transglycosylase Slt family.

Its subcellular location is the cell outer membrane. It catalyses the reaction Exolytic cleavage of the (1-&gt;4)-beta-glycosidic linkage between N-acetylmuramic acid (MurNAc) and N-acetylglucosamine (GlcNAc) residues in peptidoglycan, from either the reducing or the non-reducing ends of the peptidoglycan chains, with concomitant formation of a 1,6-anhydrobond in the MurNAc residue.. In terms of biological role, murein-degrading enzyme that degrades murein glycan strands and insoluble, high-molecular weight murein sacculi, with the concomitant formation of a 1,6-anhydromuramoyl product. Lytic transglycosylases (LTs) play an integral role in the metabolism of the peptidoglycan (PG) sacculus. Their lytic action creates space within the PG sacculus to allow for its expansion as well as for the insertion of various structures such as secretion systems and flagella. This chain is Membrane-bound lytic murein transglycosylase F, found in Escherichia coli O6:H1 (strain CFT073 / ATCC 700928 / UPEC).